We begin with the raw amino-acid sequence, 289 residues long: G1/S-specific cyclin-D2 (289 aa).

Residues 26–151 form the Cyclin N-terminal domain; it reads VLQNLLTIEE…VVLGKLKWNL (126 aa). The tract at residues 264–289 is disordered; that stretch reads DQRDGSKSEDELDQASTPTDVRDIDL. S271 is subject to Phosphoserine. T280 carries the post-translational modification Phosphothreonine.

It belongs to the cyclin family. Cyclin D subfamily. As to quaternary structure, interacts with either CDK4 or CDK6 protein kinase to form a serine/threonine kinase holoenzyme complex. The cyclin subunit imparts substrate specificity to the complex. Phosphorylation at Thr-280 by MAP kinases is required for ubiquitination and degradation by the DCX(AMBRA1) complex. In terms of processing, ubiquitinated by the DCX(AMBRA1) complex during the transition from G1 to S cell phase, leading to its degradation: ubiquitination is dependent on Thr-280 phosphorylation. The DCX(AMBRA1) complex represents the major regulator of CCND2 stability during the G1/S transition. Polyubiquitinated by the SCF(FBXL2) complex, leading to proteasomal degradation.

The protein resides in the nucleus. Its subcellular location is the cytoplasm. The protein localises to the nucleus membrane. Functionally, regulatory component of the cyclin D2-CDK4 (DC) complex that phosphorylates and inhibits members of the retinoblastoma (RB) protein family including RB1 and regulates the cell-cycle during G(1)/S transition. Phosphorylation of RB1 allows dissociation of the transcription factor E2F from the RB/E2F complex and the subsequent transcription of E2F target genes which are responsible for the progression through the G(1) phase. Hypophosphorylates RB1 in early G(1) phase. Cyclin D-CDK4 complexes are major integrators of various mitogenenic and antimitogenic signals. The protein is G1/S-specific cyclin-D2 of Homo sapiens (Human).